An 851-amino-acid chain; its full sequence is Putative cell signaling protein (851 aa).

Composition is skewed to basic and acidic residues over residues 165–176, 196–223, and 767–781; these read KLNEQDGKKSDN, DQAR…EETK, and SEER…LSHD. Disordered stretches follow at residues 165-223 and 714-781; these read KLNE…EETK and DDSE…LSHD.

In terms of processing, palmitoylated.

This is Putative cell signaling protein from Schizosaccharomyces pombe (strain 972 / ATCC 24843) (Fission yeast).